The primary structure comprises 208 residues: Fibroblast growth factor-binding protein 2 (208 aa).

Residues 1-19 (MKRVALLFLVVICGMGGLG) form the signal peptide. Disulfide bonds link Cys43-Cys59, Cys68-Cys102, and Cys77-Cys113. The interval 130 to 181 (EPEDGANRDKSSQKTSASVRGAGKSSVKKTGKPAVLPRIKPTQHGQGSENET) is disordered. Cys191 and Cys199 form a disulfide bridge.

The protein belongs to the fibroblast growth factor-binding protein family.

It localises to the secreted. It is found in the extracellular space. The chain is Fibroblast growth factor-binding protein 2 (FGFBP2) from Gallus gallus (Chicken).